A 262-amino-acid polypeptide reads, in one-letter code: Tropinone reductase homolog At2g29290 (262 aa).

13–37 (LVTGGTKGIGEAVVEELSILGARVH) is an NADP(+) binding site. A substrate-binding site is contributed by Ser146. Tyr159 acts as the Proton acceptor in catalysis.

The protein belongs to the short-chain dehydrogenases/reductases (SDR) family. SDR65C subfamily.

This chain is Tropinone reductase homolog At2g29290, found in Arabidopsis thaliana (Mouse-ear cress).